Reading from the N-terminus, the 107-residue chain is uncharacterized protein (107 aa).

3 consecutive transmembrane segments (helical) span residues 16–36 (VIPCTLSSPSFVLMAVISESL), 47–67 (IISLIESAVTSLSYVTWHSLV), and 85–105 (LIVLVQALHVIPCTASITSLI).

The protein resides in the membrane. This is an uncharacterized protein from Saccharomyces cerevisiae (strain ATCC 204508 / S288c) (Baker's yeast).